A 303-amino-acid polypeptide reads, in one-letter code: D-alanine--D-alanine ligase (303 aa).

Residues 100–295 (KQLLRRHGIL…FPALIARLIE (196 aa)) enclose the ATP-grasp domain. An ATP-binding site is contributed by 127–180 (GLGYPLFVKPNTGGSSLCLSRVTQPEGLAPALEAVFAHCGEAIVEPAIPGVEVT). The Mg(2+) site is built by aspartate 249, glutamate 262, and asparagine 264.

This sequence belongs to the D-alanine--D-alanine ligase family. The cofactor is Mg(2+). Requires Mn(2+) as cofactor.

It is found in the cytoplasm. It carries out the reaction 2 D-alanine + ATP = D-alanyl-D-alanine + ADP + phosphate + H(+). It functions in the pathway cell wall biogenesis; peptidoglycan biosynthesis. Cell wall formation. The polypeptide is D-alanine--D-alanine ligase (Nitratidesulfovibrio vulgaris (strain ATCC 29579 / DSM 644 / CCUG 34227 / NCIMB 8303 / VKM B-1760 / Hildenborough) (Desulfovibrio vulgaris)).